Consider the following 316-residue polypeptide: Phospho-N-acetylmuramoyl-pentapeptide-transferase (316 aa).

Helical transmembrane passes span 5–25, 52–72, 76–96, 116–136, 145–165, 172–192, 195–212, 221–241, 244–264, and 296–316; these read IIFA…FFIP, TMGG…FSPW, LFIL…DDFL, FLLA…EIIV, LANF…NSVN, GLAA…ALFL, VTYG…LGFL, VFMG…VALL, LPLI…SVIL, and VVYS…YSLS.

It belongs to the glycosyltransferase 4 family. MraY subfamily. Requires Mg(2+) as cofactor.

It is found in the cell membrane. It carries out the reaction UDP-N-acetyl-alpha-D-muramoyl-L-alanyl-gamma-D-glutamyl-meso-2,6-diaminopimeloyl-D-alanyl-D-alanine + di-trans,octa-cis-undecaprenyl phosphate = di-trans,octa-cis-undecaprenyl diphospho-N-acetyl-alpha-D-muramoyl-L-alanyl-D-glutamyl-meso-2,6-diaminopimeloyl-D-alanyl-D-alanine + UMP. It functions in the pathway cell wall biogenesis; peptidoglycan biosynthesis. Catalyzes the initial step of the lipid cycle reactions in the biosynthesis of the cell wall peptidoglycan: transfers peptidoglycan precursor phospho-MurNAc-pentapeptide from UDP-MurNAc-pentapeptide onto the lipid carrier undecaprenyl phosphate, yielding undecaprenyl-pyrophosphoryl-MurNAc-pentapeptide, known as lipid I. The chain is Phospho-N-acetylmuramoyl-pentapeptide-transferase from Caldanaerobacter subterraneus subsp. tengcongensis (strain DSM 15242 / JCM 11007 / NBRC 100824 / MB4) (Thermoanaerobacter tengcongensis).